Here is a 376-residue protein sequence, read N- to C-terminus: Glutamate 5-kinase (376 aa).

Lysine 15 contributes to the ATP binding site. Substrate-binding residues include serine 55, aspartate 142, and asparagine 154. ATP contacts are provided by residues threonine 174–aspartate 175 and threonine 216–lysine 222. The region spanning alanine 281–arginine 359 is the PUA domain.

This sequence belongs to the glutamate 5-kinase family.

It localises to the cytoplasm. It catalyses the reaction L-glutamate + ATP = L-glutamyl 5-phosphate + ADP. It functions in the pathway amino-acid biosynthesis; L-proline biosynthesis; L-glutamate 5-semialdehyde from L-glutamate: step 1/2. Functionally, catalyzes the transfer of a phosphate group to glutamate to form L-glutamate 5-phosphate. The protein is Glutamate 5-kinase of Trichlorobacter lovleyi (strain ATCC BAA-1151 / DSM 17278 / SZ) (Geobacter lovleyi).